A 264-amino-acid chain; its full sequence is Transmembrane protein 41A (264 aa).

The N-terminal stretch at 1–17 (MRALLGLLLVFGGCTFA) is a signal peptide. Transmembrane regions (helical) follow at residues 67–87 (AYVF…AIPG), 100–122 (GPWL…CYLL), 153–173 (LFFF…FLNL), 175–195 (APIL…GLIP), and 219–239 (WETV…GTLI). The tract at residues 96–207 (GALFGPWLGL…FICVQTGSIL (112 aa)) is VTT domain.

Belongs to the TMEM41 family.

The protein localises to the membrane. In Mus musculus (Mouse), this protein is Transmembrane protein 41A (Tmem41a).